The chain runs to 157 residues: uncharacterized protein (157 aa).

The interval 1 to 157 is disordered; it reads MNRGPPLRSR…SFSFLVPSNS (157 aa). Positions 8–31 are enriched in pro residues; sequence RSRPPSSPPPASAFPGPSPFPSPS. Basic residues predominate over residues 62-71; the sequence is RTSHPPRCPH. Over residues 76 to 95 the composition is skewed to pro residues; it reads PSAPSPPFTPPHPLPTPTPS. 2 stretches are compositionally biased toward low complexity: residues 96-117 and 124-157; these read SSPR…SLAS and SFSS…PSNS.

This is an uncharacterized protein from Vitis vinifera (Grape).